The chain runs to 180 residues: Pro-glucagon (180 aa).

The signal sequence occupies residues 1-20 (MKSLYFVAGLFVMLVQGSWQ). The segment covering 25–35 (NTEEKSSSFPA) has biased composition (polar residues). Residues 25–59 (NTEEKSSSFPAPQTDPLGDPDQINEDKRHSQGTFT) form a disordered region. Ser54 is modified (phosphoserine). Positions 84 to 89 (NKNNIA) are excised as a propeptide. A phosphoserine mark is found at Ser105 and Ser108. Arg127 carries the arginine amide modification. A propeptide spanning residues 131–145 (DFPEEVNIVEELRRR) is cleaved from the precursor. Phosphoserine occurs at positions 150 and 152.

It belongs to the glucagon family. Proglucagon is post-translationally processed in a tissue-specific manner in pancreatic A cells and intestinal L cells. In pancreatic A cells, the major bioactive hormone is glucagon cleaved by PCSK2/PC2. In the intestinal L cells PCSK1/PC1 liberates GLP-1, GLP-2, glicentin and oxyntomodulin. GLP-1 is further N-terminally truncated by post-translational processing in the intestinal L cells resulting in GLP-1(7-37) GLP-1-(7-36)amide. The C-terminal amidation is neither important for the metabolism of GLP-1 nor for its effects on the endocrine pancreas. As to expression, glucagon is secreted in the A cells of the islets of Langerhans. GLP-1, GLP-2, oxyntomodulin and glicentin are secreted from enteroendocrine cells throughout the gastrointestinal tract.

The protein resides in the secreted. In terms of biological role, plays a key role in glucose metabolism and homeostasis. Regulates blood glucose by increasing gluconeogenesis and decreasing glycolysis. A counterregulatory hormone of insulin, raises plasma glucose levels in response to insulin-induced hypoglycemia. Plays an important role in initiating and maintaining hyperglycemic conditions in diabetes. Potent stimulator of glucose-dependent insulin release. Also stimulates insulin release in response to IL6. Plays important roles on gastric motility and the suppression of plasma glucagon levels. May be involved in the suppression of satiety and stimulation of glucose disposal in peripheral tissues, independent of the actions of insulin. Has growth-promoting activities on intestinal epithelium. May also regulate the hypothalamic pituitary axis (HPA) via effects on LH, TSH, CRH, oxytocin, and vasopressin secretion. Increases islet mass through stimulation of islet neogenesis and pancreatic beta cell proliferation. Inhibits beta cell apoptosis. Its function is as follows. Stimulates intestinal growth and up-regulates villus height in the small intestine, concomitant with increased crypt cell proliferation and decreased enterocyte apoptosis. The gastrointestinal tract, from the stomach to the colon is the principal target for GLP-2 action. Plays a key role in nutrient homeostasis, enhancing nutrient assimilation through enhanced gastrointestinal function, as well as increasing nutrient disposal. Stimulates intestinal glucose transport and decreases mucosal permeability. Functionally, significantly reduces food intake. Inhibits gastric emptying in humans. Suppression of gastric emptying may lead to increased gastric distension, which may contribute to satiety by causing a sensation of fullness. In terms of biological role, may modulate gastric acid secretion and the gastro-pyloro-duodenal activity. May play an important role in intestinal mucosal growth in the early period of life. The chain is Pro-glucagon (GCG) from Bos taurus (Bovine).